The following is a 133-amino-acid chain: ATP synthase epsilon chain, chloroplastic (133 aa).

Belongs to the ATPase epsilon chain family. F-type ATPases have 2 components, CF(1) - the catalytic core - and CF(0) - the membrane proton channel. CF(1) has five subunits: alpha(3), beta(3), gamma(1), delta(1), epsilon(1). CF(0) has three main subunits: a, b and c.

It is found in the plastid. It localises to the chloroplast thylakoid membrane. Its function is as follows. Produces ATP from ADP in the presence of a proton gradient across the membrane. The sequence is that of ATP synthase epsilon chain, chloroplastic from Citrus sinensis (Sweet orange).